The following is an 867-amino-acid chain: Envelope glycoprotein gp160 (867 aa).

An N-terminal signal peptide occupies residues 1 to 31; the sequence is MRVKGIRKNYQHLWRWGTMLLGILMICSAAE. Over 32-695 the chain is Extracellular; the sequence is QLWVTVYYGV…ITNWLWYIRI (664 aa). An intrachain disulfide couples Cys53 to Cys73. 15 N-linked (GlcNAc...) asparagine; by host glycosylation sites follow: Asn87, Asn135, Asn140, Asn143, Asn159, Asn163, Asn188, Asn189, Asn199, Asn209, Asn246, Asn253, Asn274, Asn288, and Asn307. 5 disulfides stabilise this stretch: Cys118–Cys217, Cys125–Cys208, Cys130–Cys160, Cys230–Cys259, and Cys240–Cys251. A V1 region spans residues 130–159; the sequence is CIDWGNDTSPNATNTTSSGGEKMEKGEMKN. The V2 stretch occupies residues 160–208; the sequence is CSFNITTSIRDKVQKEHALFYKHDVVPINNSTKDNIKNDNSTRYRLISC. Residues 308 to 341 are V3; sequence CTRPSKTTRRRIHIGPGRAFYTTKQIAGDLRQAH. Residues Cys308 and Cys342 are joined by a disulfide bond. 3 N-linked (GlcNAc...) asparagine; by host glycosylation sites follow: Asn350, Asn366, and Asn372. A CD4-binding loop region spans residues 374 to 384; it reads SSGGDPEIVMH. 2 disulfide bridges follow: Cys388–Cys457 and Cys395–Cys430. The V4 stretch occupies residues 395 to 430; it reads CNSTQLFNSTWLSNSTWNDTEGSNNTGGNDTITLPC. N-linked (GlcNAc...) asparagine; by host glycans are attached at residues Asn396, Asn402, Asn408, Asn412, Asn418, Asn423, Asn460, and Asn475. 2 V5 regions span residues 473-483 and 475-483; these read NQNETETFRPG and NETETFRPG. The fusion peptide stretch occupies residues 524–544; sequence AVGIGAVFLGFLGAAGSTMGA. Residues 585 to 603 are immunosuppression; sequence KQLQARILAVERYLKDQQL. The cysteines at positions 609 and 615 are disulfide-linked. N-linked (GlcNAc...) asparagine; by host glycans are attached at residues Asn622, Asn627, Asn636, and Asn648. Positions 644–678 form a coiled coil; it reads REIDNYTSLIYTLIEESQNQQEKNEQELLGLDKWA. Residues 673–694 are MPER; binding to GalCer; it reads GLDKWASLWNWFTITNWLWYIR. The helical transmembrane segment at 696–716 threads the bilayer; that stretch reads FIMIVGGLVGLRIVFTVLSIV. Over 717 to 867 the chain is Cytoplasmic; it reads NRVRQGYSPL…IRQGLERALL (151 aa). Positions 723–726 match the YXXL motif; contains endocytosis signal motif; the sequence is YSPL. The tract at residues 730 to 755 is disordered; it reads TRLPAPRGPDRPEGIEEEGGDRDRDR. Cys775 carries the S-palmitoyl cysteine; by host lipid modification. The short motif at 866-867 is the Di-leucine internalization motif element; that stretch reads LL.

The protein belongs to the HIV-1 env protein family. As to quaternary structure, the mature envelope protein (Env) consists of a homotrimer of non-covalently associated gp120-gp41 heterodimers. The resulting complex protrudes from the virus surface as a spike. There seems to be as few as 10 spikes on the average virion. Interacts with host CD4, CCR5 and CXCR4. Gp120 also interacts with the C-type lectins CD209/DC-SIGN and CLEC4M/DC-SIGNR (collectively referred to as DC-SIGN(R)). Gp120 and gp41 interact with GalCer. Gp120 interacts with host ITGA4/ITGB7 complex; on CD4+ T-cells, this interaction results in rapid activation of integrin ITGAL/LFA-1, which facilitates efficient cell-to-cell spreading of HIV-1. Gp120 interacts with cell-associated heparan sulfate; this interaction increases virus infectivity on permissive cells and may be involved in infection of CD4- cells. In terms of assembly, the mature envelope protein (Env) consists of a homotrimer of non-covalently associated gp120-gp41 heterodimers. The resulting complex protrudes from the virus surface as a spike. There seems to be as few as 10 spikes on the average virion. In terms of processing, highly glycosylated by host. The high number of glycan on the protein is reffered to as 'glycan shield' because it contributes to hide protein sequence from adaptive immune system. Post-translationally, palmitoylation of the transmembrane protein and of Env polyprotein (prior to its proteolytic cleavage) is essential for their association with host cell membrane lipid rafts. Palmitoylation is therefore required for envelope trafficking to classical lipid rafts, but not for viral replication. Specific enzymatic cleavages in vivo yield mature proteins. Envelope glycoproteins are synthesized as an inactive precursor that is heavily N-glycosylated and processed likely by host cell furin in the Golgi to yield the mature SU and TM proteins. The cleavage site between SU and TM requires the minimal sequence [KR]-X-[KR]-R. About 2 of the 9 disulfide bonds of gp41 are reduced by P4HB/PDI, following binding to CD4 receptor.

The protein resides in the virion membrane. The protein localises to the host cell membrane. It is found in the host endosome membrane. In terms of biological role, oligomerizes in the host endoplasmic reticulum into predominantly trimers. In a second time, gp160 transits in the host Golgi, where glycosylation is completed. The precursor is then proteolytically cleaved in the trans-Golgi and thereby activated by cellular furin or furin-like proteases to produce gp120 and gp41. Its function is as follows. Attaches the virus to the host lymphoid cell by binding to the primary receptor CD4. This interaction induces a structural rearrangement creating a high affinity binding site for a chemokine coreceptor like CXCR4 and/or CCR5. Acts as a ligand for CD209/DC-SIGN and CLEC4M/DC-SIGNR, which are respectively found on dendritic cells (DCs), and on endothelial cells of liver sinusoids and lymph node sinuses. These interactions allow capture of viral particles at mucosal surfaces by these cells and subsequent transmission to permissive cells. HIV subverts the migration properties of dendritic cells to gain access to CD4+ T-cells in lymph nodes. Virus transmission to permissive T-cells occurs either in trans (without DCs infection, through viral capture and transmission), or in cis (following DCs productive infection, through the usual CD4-gp120 interaction), thereby inducing a robust infection. In trans infection, bound virions remain infectious over days and it is proposed that they are not degraded, but protected in non-lysosomal acidic organelles within the DCs close to the cell membrane thus contributing to the viral infectious potential during DCs' migration from the periphery to the lymphoid tissues. On arrival at lymphoid tissues, intact virions recycle back to DCs' cell surface allowing virus transmission to CD4+ T-cells. Acts as a class I viral fusion protein. Under the current model, the protein has at least 3 conformational states: pre-fusion native state, pre-hairpin intermediate state, and post-fusion hairpin state. During fusion of viral and target intracellular membranes, the coiled coil regions (heptad repeats) assume a trimer-of-hairpins structure, positioning the fusion peptide in close proximity to the C-terminal region of the ectodomain. The formation of this structure appears to drive apposition and subsequent fusion of viral and target cell membranes. Complete fusion occurs in host cell endosomes and is dynamin-dependent, however some lipid transfer might occur at the plasma membrane. The virus undergoes clathrin-dependent internalization long before endosomal fusion, thus minimizing the surface exposure of conserved viral epitopes during fusion and reducing the efficacy of inhibitors targeting these epitopes. Membranes fusion leads to delivery of the nucleocapsid into the cytoplasm. This chain is Envelope glycoprotein gp160, found in Homo sapiens (Human).